The primary structure comprises 720 residues: Engulfment and cell motility protein 2 (720 aa).

At Tyr48 the chain carries Phosphotyrosine. Positions 311 to 485 (AQRDIIFELR…VVREQITRAL (175 aa)) constitute an ELMO domain. At Ser503 the chain carries Phosphoserine. One can recognise a PH domain in the interval 553 to 674 (SSFRKIGNRR…LLGKDMSSEL (122 aa)). The SH3-binding signature appears at 700–707 (PEAPPPIP). Residue Tyr717 is modified to Phosphotyrosine.

Interacts with the SH3-domain of DOCK1 via its SH3-binding site. Probably part of a complex with DOCK1 and RAC1. Probably part of a complex with DOCK1 and CRK isoform CRK-II. Interacts with ARHGEF16, DOCK4 and EPHA2; mediates activation of RAC1 by EPHA2. Interacts with ADGRB3. Interacts with AUTS2; the interaction is direct. In terms of tissue distribution, widely expressed, with a higher expression in skeletal muscle, kidney and placenta.

It is found in the cytoplasm. The protein localises to the cytosol. It localises to the membrane. Its function is as follows. Involved in cytoskeletal rearrangements required for phagocytosis of apoptotic cells and cell motility. Acts in association with DOCK1 and CRK. Was initially proposed to be required in complex with DOCK1 to activate Rac Rho small GTPases. May enhance the guanine nucleotide exchange factor (GEF) activity of DOCK1. In Homo sapiens (Human), this protein is Engulfment and cell motility protein 2 (ELMO2).